The sequence spans 547 residues: Rho GTPase-activating protein 36 (547 aa).

The N-terminal stretch at 1-40 (MGGCIPFLKAARALCPRIMPPLLLLSAFIFLVSVLGGAPG) is a signal peptide. The region spanning 226–426 (MSLNPIAKQI…AMIDNWDVLF (201 aa)) is the Rho-GAP domain. The tract at residues 485-547 (AVLAQSKPSD…AKTGVSYFFP (63 aa)) is disordered. Residues 524–539 (EQDRPLLRVPREKEAK) show a composition bias toward basic and acidic residues.

May interacts (via the Rho-GAP domain) with the active form of RAC1. Detected in the outer root sheath of hair follicles at the level of the stem cell bulge, during the anagen and telogen phases of hair growth (at protein level).

Functionally, GTPase activator for the Rho-type GTPases by converting them to an inactive GDP-bound state. The protein is Rho GTPase-activating protein 36 (ARHGAP36) of Homo sapiens (Human).